We begin with the raw amino-acid sequence, 142 residues long: Calmodulin-alpha (142 aa).

At Ala-2 the chain carries N-acetylalanine. 4 EF-hand domains span residues 8–43, 44–79, 81–116, and 117–142; these read EQIA…LGQN, PTEA…KMKD, DSEE…LGEK, and LTDE…YEEF. Positions 21, 23, 25, 27, 32, 57, 59, 61, 63, 68, 94, 96, 98, 100, and 105 each coordinate Ca(2+). N6,N6,N6-trimethyllysine is present on Lys-116. Ca(2+) contacts are provided by Asp-130, Asp-132, Asp-134, Gln-136, and Glu-141.

This sequence belongs to the calmodulin family.

In terms of biological role, calmodulin mediates the control of a large number of enzymes, ion channels and other proteins by Ca(2+). Among the enzymes to be stimulated by the calmodulin-Ca(2+) complex are a number of protein kinases and phosphatases. This Arbacia punctulata (Punctuate sea urchin) protein is Calmodulin-alpha.